The chain runs to 89 residues: Small ribosomal subunit protein uS14 (89 aa).

Belongs to the universal ribosomal protein uS14 family. As to quaternary structure, part of the 30S ribosomal subunit. Contacts proteins S3 and S10.

Its function is as follows. Binds 16S rRNA, required for the assembly of 30S particles and may also be responsible for determining the conformation of the 16S rRNA at the A site. In Phytoplasma australiense, this protein is Small ribosomal subunit protein uS14.